The chain runs to 280 residues: DNA repair protein RecO (280 aa).

Positions 261–280 (DMAHGNHTGQEDLPATASGA) are disordered.

It belongs to the RecO family.

Functionally, involved in DNA repair and RecF pathway recombination. The protein is DNA repair protein RecO of Mycolicibacterium smegmatis (strain ATCC 700084 / mc(2)155) (Mycobacterium smegmatis).